A 284-amino-acid polypeptide reads, in one-letter code: Undecaprenyl-diphosphatase (284 aa).

The next 8 helical transmembrane spans lie at 1 to 21 (MNWL…FLPV), 43 to 63 (ITAF…LYFW), 88 to 108 (YTLG…GLVF), 116 to 136 (LSSL…MWLG), 149 to 169 (IGIV…LFPG), 193 to 213 (LSFF…SVSA), 225 to 245 (VAIG…VAYV), and 259 to 279 (FTGF…LILS).

The protein belongs to the UppP family.

The protein localises to the cell membrane. The catalysed reaction is di-trans,octa-cis-undecaprenyl diphosphate + H2O = di-trans,octa-cis-undecaprenyl phosphate + phosphate + H(+). Its function is as follows. Catalyzes the dephosphorylation of undecaprenyl diphosphate (UPP). Confers resistance to bacitracin. The chain is Undecaprenyl-diphosphatase from Cutibacterium acnes (strain DSM 16379 / KPA171202) (Propionibacterium acnes).